Reading from the N-terminus, the 89-residue chain is UPF0223 protein BCG9842_B1176 (89 aa).

The protein belongs to the UPF0223 family.

The sequence is that of UPF0223 protein BCG9842_B1176 from Bacillus cereus (strain G9842).